The following is a 22-amino-acid chain: thr operon leader peptide (22 aa).

The protein belongs to the thr operon leader peptide family.

In terms of biological role, this protein is involved in control of the biosynthesis of threonine. The protein is thr operon leader peptide of Yersinia pestis bv. Antiqua (strain Antiqua).